Consider the following 333-residue polypeptide: UPF0285 protein MTH_1441 (333 aa).

Belongs to the UPF0285 family.

The chain is UPF0285 protein MTH_1441 from Methanothermobacter thermautotrophicus (strain ATCC 29096 / DSM 1053 / JCM 10044 / NBRC 100330 / Delta H) (Methanobacterium thermoautotrophicum).